Reading from the N-terminus, the 118-residue chain is Sporulation protein YjcA (118 aa).

Helical transmembrane passes span isoleucine 8–methionine 28, phenylalanine 62–isoleucine 82, and alanine 92–valine 112.

The protein belongs to the UPF0713 family.

The protein resides in the cell membrane. Functionally, involved in sporulation. In Bacillus subtilis (strain 168), this protein is Sporulation protein YjcA (yjcA).